Reading from the N-terminus, the 232-residue chain is MLSGDIPPNQTVYLRNLNEKVKKEELKRSLYALCSQYGRILDVVALKTPKLRGQAWVVFSEITAATNAFRGLQEFDFYGKRMRVQYAKTKSDCLATEDGSTAPKEKRKKQEEKAAEKKRRAEEAQQSGPNAAAQSNGTGYQASRLGKTSQEPPAPPNNILFIQNLPAETTSMMLQILFQQYPGFREVRMIEAKPGIAFVEYEDDSQSMVAMQALQGFKITPYNPMAISYAKK.

In terms of domain architecture, RRM 1 spans 10 to 89; it reads QTVYLRNLNE…KRMRVQYAKT (80 aa). The segment at 92–159 is disordered; it reads DCLATEDGST…QEPPAPPNNI (68 aa). Residues 108–123 are compositionally biased toward basic and acidic residues; that stretch reads KKQEEKAAEKKRRAEE. Positions 127–151 are enriched in polar residues; it reads SGPNAAAQSNGTGYQASRLGKTSQE. The 75-residue stretch at 158–232 folds into the RRM 2 domain; it reads NILFIQNLPA…NPMAISYAKK (75 aa).

Belongs to the RRM U1 A/B'' family. As to quaternary structure, component of the spliceosome where it is associated with snRNP U2.

The protein resides in the nucleus. The protein localises to the cajal body. It localises to the nucleoplasm. Its subcellular location is the cytoplasm. In terms of biological role, involved in nuclear pre-mRNA splicing. The chain is U2 small nuclear ribonucleoprotein B'' from Oryza sativa subsp. indica (Rice).